The sequence spans 114 residues: uncharacterized protein (114 aa).

The interval 90–114 is disordered; sequence VESSQKRKPEESTIGMDAPKKMKRG.

This is an uncharacterized protein from Caenorhabditis elegans.